We begin with the raw amino-acid sequence, 55 residues long: Small ribosomal subunit protein uS14 (55 aa).

Cys-20, Cys-23, Cys-38, and Cys-41 together coordinate Zn(2+).

This sequence belongs to the universal ribosomal protein uS14 family. Zn(2+) serves as cofactor.

The protein is Small ribosomal subunit protein uS14 (rps29) of Dictyostelium discoideum (Social amoeba).